Reading from the N-terminus, the 466-residue chain is Asparagine--tRNA ligase (466 aa).

The protein belongs to the class-II aminoacyl-tRNA synthetase family. In terms of assembly, homodimer.

It localises to the cytoplasm. It carries out the reaction tRNA(Asn) + L-asparagine + ATP = L-asparaginyl-tRNA(Asn) + AMP + diphosphate + H(+). The sequence is that of Asparagine--tRNA ligase from Xylella fastidiosa (strain 9a5c).